We begin with the raw amino-acid sequence, 559 residues long: Spermidine/putrescine import ATP-binding protein PotA (559 aa).

Residues 7–448 (IEIEGLNKTF…PKTEWIANFI (442 aa)) form the ABC transporter domain. Position 40–47 (40–47 (GPSGCGKT)) interacts with ATP. Residues 108–317 (WTKLDEIPKL…EAFEKRYLSR (210 aa)) form an insert region.

Belongs to the ABC transporter superfamily. Spermidine/putrescine importer (TC 3.A.1.11.1) family. As to quaternary structure, the complex is composed of two ATP-binding proteins (PotA), two transmembrane proteins (PotB and PotC) and a solute-binding protein (PotD).

The protein localises to the cell membrane. The enzyme catalyses ATP + H2O + polyamine-[polyamine-binding protein]Side 1 = ADP + phosphate + polyamineSide 2 + [polyamine-binding protein]Side 1.. Functionally, part of the ABC transporter complex PotABCD involved in spermidine/putrescine import. Responsible for energy coupling to the transport system. This chain is Spermidine/putrescine import ATP-binding protein PotA, found in Mycoplasma genitalium (strain ATCC 33530 / DSM 19775 / NCTC 10195 / G37) (Mycoplasmoides genitalium).